Here is a 357-residue protein sequence, read N- to C-terminus: N-acetyl-gamma-glutamyl-phosphate reductase (357 aa).

The active site involves cysteine 160.

The protein belongs to the NAGSA dehydrogenase family. Type 1 subfamily.

The protein resides in the cytoplasm. It catalyses the reaction N-acetyl-L-glutamate 5-semialdehyde + phosphate + NADP(+) = N-acetyl-L-glutamyl 5-phosphate + NADPH + H(+). It participates in amino-acid biosynthesis; L-arginine biosynthesis; N(2)-acetyl-L-ornithine from L-glutamate: step 3/4. Catalyzes the NADPH-dependent reduction of N-acetyl-5-glutamyl phosphate to yield N-acetyl-L-glutamate 5-semialdehyde. The sequence is that of N-acetyl-gamma-glutamyl-phosphate reductase from Parasynechococcus marenigrum (strain WH8102).